The sequence spans 711 residues: DNA topoisomerase 3 (711 aa).

Residues 2–135 (KSLILAEKPS…IRRLWISSVT (134 aa)) form the Toprim domain. Residues glutamate 8 and aspartate 104 each contribute to the Mg(2+) site. The Topo IA-type catalytic domain maps to 152–580 (YNDLYYAALA…EMKDFTKDVV (429 aa)). The interval 186-191 (SLGRVQ) is interaction with DNA. Tyrosine 305 (O-(5'-phospho-DNA)-tyrosine intermediate) is an active-site residue. Residues 691–711 (MNKNEGLDNNPFKDALKNLNL) form a disordered region.

Belongs to the type IA topoisomerase family. Mg(2+) serves as cofactor.

It carries out the reaction ATP-independent breakage of single-stranded DNA, followed by passage and rejoining.. In terms of biological role, releases the supercoiling and torsional tension of DNA, which is introduced during the DNA replication and transcription, by transiently cleaving and rejoining one strand of the DNA duplex. Introduces a single-strand break via transesterification at a target site in duplex DNA. The scissile phosphodiester is attacked by the catalytic tyrosine of the enzyme, resulting in the formation of a DNA-(5'-phosphotyrosyl)-enzyme intermediate and the expulsion of a 3'-OH DNA strand. The free DNA strand then undergoes passage around the unbroken strand, thus removing DNA supercoils. Finally, in the religation step, the DNA 3'-OH attacks the covalent intermediate to expel the active-site tyrosine and restore the DNA phosphodiester backbone. The polypeptide is DNA topoisomerase 3 (Staphylococcus aureus (strain Mu50 / ATCC 700699)).